A 714-amino-acid chain; its full sequence is Angiogenic factor with G patch and FHA domains 1 (714 aa).

Residues Met-1–Pro-18 are compositionally biased toward pro residues. 3 disordered regions span residues Met-1 to Leu-22, Gln-259 to Cys-307, and Ile-322 to Glu-384. An N-acetylalanine modification is found at Ala-2. Residues Ser-7 and Ser-11 each carry the phosphoserine modification. Residues Pro-18–Lys-88 adopt a coiled-coil conformation. The span at Lys-279 to Lys-298 shows a compositional bias: basic and acidic residues. Polar residues predominate over residues Val-335–Ser-355. Ser-344 carries the post-translational modification Phosphoserine. The segment covering Thr-364 to Asp-383 has biased composition (acidic residues). Residues Ala-434–Ile-487 form the FHA domain. A compositionally biased stretch (basic and acidic residues) spans Lys-586–Ala-609. 2 disordered regions span residues Lys-586–Ile-617 and Arg-655–Glu-714. Positions Asp-619–Pro-665 constitute a G-patch domain. Lys-664 carries the post-translational modification N6-acetyllysine. The span at Lys-680–Thr-690 shows a compositional bias: basic and acidic residues.

As to quaternary structure, interacts with the secreted angiogenic factor TNFSF12. In terms of tissue distribution, widely expressed. Expressed in endothelial cells, vascular smooth muscle cells and osteoblasts. Expressed in umbilical vein endothelial cells and microvascular endothelial cells.

It localises to the cytoplasm. It is found in the secreted. In terms of biological role, promotes angiogenesis and the proliferation of endothelial cells. Able to bind to endothelial cells and promote cell proliferation, suggesting that it may act in an autocrine fashion. This chain is Angiogenic factor with G patch and FHA domains 1 (AGGF1), found in Homo sapiens (Human).